A 140-amino-acid chain; its full sequence is Class I hydrophobin B (140 aa).

Residues 1 to 16 (MKFLAVVSLLAATALA) form the signal peptide. Intrachain disulfides connect Cys-42-Cys-113, Cys-50-Cys-107, Cys-51-Cys-88, and Cys-114-Cys-133. Asn-117 is a glycosylation site (N-linked (GlcNAc...) asparagine).

It belongs to the fungal hydrophobin family. Self-assembles to form functional amyloid fibrils called rodlets. Self-assembly into fibrillar rodlets occurs spontaneously at hydrophobic:hydrophilic interfaces and the rodlets further associate laterally to form amphipathic monolayers.

It localises to the secreted. It is found in the spore wall. Functionally, aerial growth, conidiation, and dispersal of filamentous fungi in the environment rely upon a capability of their secreting small amphipathic proteins called hydrophobins (HPBs) with low sequence identity. Class I can self-assemble into an outermost layer of rodlet bundles on aerial cell surfaces, conferring cellular hydrophobicity that supports fungal growth, development and dispersal; whereas Class II form highly ordered films at water-air interfaces through intermolecular interactions but contribute nothing to the rodlet structure. RodB is a class I hydrophobin that, unlike rodA, is not required for rodlet formation. The chain is Class I hydrophobin B from Aspergillus fumigatus (strain ATCC MYA-4609 / CBS 101355 / FGSC A1100 / Af293) (Neosartorya fumigata).